The following is a 177-amino-acid chain: Large ribosomal subunit protein uL6 (177 aa).

This sequence belongs to the universal ribosomal protein uL6 family. In terms of assembly, part of the 50S ribosomal subunit.

In terms of biological role, this protein binds to the 23S rRNA, and is important in its secondary structure. It is located near the subunit interface in the base of the L7/L12 stalk, and near the tRNA binding site of the peptidyltransferase center. This is Large ribosomal subunit protein uL6 from Verminephrobacter eiseniae (strain EF01-2).